The primary structure comprises 281 residues: MQPMARGIQRSVTMIEAMVQALQYEFMQNAIVASLLVSLACGLIGSFIVINRMVFISGGVAHAAYGGIGLGYYFAFNPLWGAFVFSLVMALAMGWVARKYQQRSDTLIGVMWALGMAIGIMLIDLTKGYKADVASYLFGSILTVPRQELWLMAGLDMLIIILLFLLYKEFLAISFDPVYATTRNLPVDILYLTLVAAIALTVVMVMQLVGLIMVIALLSIPAAIAGQYVRDVPQMMAVASGLGMVFCGVGLALSYSFNLSSGATIILVASIAYLISLAFRR.

8 helical membrane passes run alanine 30–isoleucine 50, valine 54–phenylalanine 74, phenylalanine 76–valine 96, threonine 106–threonine 126, alanine 153–isoleucine 173, isoleucine 198–leucine 218, methionine 235–tyrosine 255, and leucine 259–phenylalanine 279.

Belongs to the ABC-3 integral membrane protein family.

It localises to the cell membrane. This is an uncharacterized protein from Synechocystis sp. (strain ATCC 27184 / PCC 6803 / Kazusa).